The following is a 204-amino-acid chain: Methylthioribulose-1-phosphate dehydratase (204 aa).

Residues His94 and His96 each contribute to the Zn(2+) site.

Belongs to the aldolase class II family. MtnB subfamily. Requires Zn(2+) as cofactor.

The enzyme catalyses 5-(methylsulfanyl)-D-ribulose 1-phosphate = 5-methylsulfanyl-2,3-dioxopentyl phosphate + H2O. It participates in amino-acid biosynthesis; L-methionine biosynthesis via salvage pathway; L-methionine from S-methyl-5-thio-alpha-D-ribose 1-phosphate: step 2/6. In terms of biological role, catalyzes the dehydration of methylthioribulose-1-phosphate (MTRu-1-P) into 2,3-diketo-5-methylthiopentyl-1-phosphate (DK-MTP-1-P). The chain is Methylthioribulose-1-phosphate dehydratase from Enterobacter sp. (strain 638).